The sequence spans 830 residues: MPSQSRSRDRYRGRDTEYTRRRYPDEHDYSHDDHDYDYDDDDDDNDDLEQDVTERRYRRDGYRRPRGESRARAYYERDAAAAAAHDEELLAEERERRRAGASGSPRKSGQHRERDRDRERDREAQSRRRTYEDDGRHRTRDGRRERRREGGGEGGRRERRRGESRRGEAARKHQSSDSTNSASHLLSADALARLGSQYEKEDRRERAHAKDAAKAERKRRKKRAVVGEQERGLRAEKPRDRSRARVASGAYMEEGRGPEMEFRRRGGGGPPMDARWPKGGGWGGSVDGGDAGRPFWKQKKWLIGIGVVILILVIVIPVAVVVSKKHNDKPNATTTQPDGTTPSNSNLDGLSPDSIPGYAKGTFLDPWTWYDTNDFNVTFTNETVGGLSLMGLNSTWDDSARPNDNVPPLNKPFPYGKQPIRGVNLGGWLSLEPFITPSFFQSYSALSGVIDEYTLTQKLGSTAGARLEKHYATFITEQDFADIRDAGLDHVRIQYSYWAVTTYDGDPYVAKTSWRYLLRAIEYCRKYGLRVKLDPHGIPGSQNGWNHSGRQGAIGWLNGTDGELNRKRSLEVHDQVSKFFAQDRYKNVVTIYGLVNEPLMLSLSVEDVLNWTVEATKLVQKNGITAYIALHDGFLNLSKWKSILKTRPDNMLLDTHQYTIFNTGQIVLNHTARVNLICNDWSAMIKEVNSTSGFGPTICGEWSQADTDCAQYLNNVGRGTRWEGTFSLTDSTQYCPTADSGPRCSCANANADPSAYSADYKKFLQTYAEAQMSAFETGQGWFYWTWRTESAAQWSYRTAWKGGFMPQKAYSPSFKCGDTVPDFGSLPEYY.

Basic and acidic residues predominate over residues 1–34 (MPSQSRSRDRYRGRDTEYTRRRYPDEHDYSHDDH). Residues 1–279 (MPSQSRSRDR…PPMDARWPKG (279 aa)) form a disordered region. Topologically, residues 1–301 (MPSQSRSRDR…GRPFWKQKKW (301 aa)) are cytoplasmic. The span at 35–51 (DYDYDDDDDDNDDLEQD) shows a compositional bias: acidic residues. Composition is skewed to basic and acidic residues over residues 52-98 (VTER…ERRR) and 110-175 (QHRE…KHQS). The span at 181–194 (SASHLLSADALARL) shows a compositional bias: low complexity. Composition is skewed to basic and acidic residues over residues 198-215 (YEKEDRRERAHAKDAAKA), 228-243 (EQERGLRAEKPRDRSR), and 253-264 (EEGRGPEMEFRR). Residues 302–322 (LIGIGVVILILVIVIPVAVVV) form a helical; Signal-anchor for type II membrane protein membrane-spanning segment. Over 323-830 (SKKHNDKPNA…PDFGSLPEYY (508 aa)) the chain is Extracellular. Residues 327-351 (NDKPNATTTQPDGTTPSNSNLDGLS) are disordered. Over residues 330-348 (PNATTTQPDGTTPSNSNLD) the composition is skewed to polar residues. N331, N376, N381, N393, N546, and N558 each carry an N-linked (GlcNAc...) asparagine glycan. Catalysis depends on E597, which acts as the Proton donor. N-linked (GlcNAc...) asparagine glycans are attached at residues N610, N636, N669, and N689. The active-site Nucleophile is E701.

This sequence belongs to the glycosyl hydrolase 5 (cellulase A) family.

The protein localises to the cell membrane. It catalyses the reaction Successive hydrolysis of beta-D-glucose units from the non-reducing ends of (1-&gt;3)-beta-D-glucans, releasing alpha-glucose.. Glucosidase involved in the degradation of cellulosic biomass. Active on lichenan. The polypeptide is Probable glucan 1,3-beta-glucosidase D (exgD) (Aspergillus clavatus (strain ATCC 1007 / CBS 513.65 / DSM 816 / NCTC 3887 / NRRL 1 / QM 1276 / 107)).